The following is a 227-amino-acid chain: MPDILTASQMRALETAAFNSGAVTGLELMERAGQSVIDALFSSKAELATGEHRAVILCGPGNNGGDGFVIARLLFVLGWQVRVYLYADPEKMPRDAHANHDSWVDLVPECTQRISFPSVLPAEAERFGDEAFGNGEVDVIVDALFGIGLNRPLSGLHPILATCHANRHEAYFVAVDVPSGLGENGPLEAADWSVFPADLTVTFHRPKQAHQNGLSFCGKIMVQYIGL.

The YjeF N-terminal domain occupies 10–227 (MRALETAAFN…GKIMVQYIGL (218 aa)). (6S)-NADPHX is bound at residue 62-66 (NNGGD). The K(+) site is built by asparagine 63 and aspartate 142. (6S)-NADPHX contacts are provided by residues 146–152 (GIGLNRP) and aspartate 176. Serine 179 is a binding site for K(+).

Belongs to the NnrE/AIBP family. K(+) is required as a cofactor.

The enzyme catalyses (6R)-NADHX = (6S)-NADHX. It catalyses the reaction (6R)-NADPHX = (6S)-NADPHX. In terms of biological role, catalyzes the epimerization of the S- and R-forms of NAD(P)HX, a damaged form of NAD(P)H that is a result of enzymatic or heat-dependent hydration. This is a prerequisite for the S-specific NAD(P)H-hydrate dehydratase to allow the repair of both epimers of NAD(P)HX. The chain is NAD(P)H-hydrate epimerase from Roseobacter litoralis (strain ATCC 49566 / DSM 6996 / JCM 21268 / NBRC 15278 / OCh 149).